Reading from the N-terminus, the 252-residue chain is 5'-nucleotidase SurE (252 aa).

Residues aspartate 8, aspartate 9, serine 39, and asparagine 91 each coordinate a divalent metal cation.

This sequence belongs to the SurE nucleotidase family. A divalent metal cation is required as a cofactor.

It is found in the cytoplasm. The catalysed reaction is a ribonucleoside 5'-phosphate + H2O = a ribonucleoside + phosphate. In terms of biological role, nucleotidase that shows phosphatase activity on nucleoside 5'-monophosphates. This chain is 5'-nucleotidase SurE, found in Legionella pneumophila (strain Lens).